The sequence spans 362 residues: MTRLTRPMVRSPISLPSTPSQLLHSASLSSSPSSPSLVQQSHSYHGDYFSIKPKLSLDFAHSSDNFSDESELENNSTSFVDDDDIVKVRETFDNISIDIGASNPFAKNKHQWSYSPITPYDIVDENHTITVSTPKTNSQLLYTTTSPQLPRKETLSLKFGPSTLKSTVSTSTSTSTSTSTGTNTETKTVTTAAKSTNFTLSMPNLQQHKFLLVDDNLINLKILNRILLKLYPKAQITQVLDSTKVAKLVEENEYDAVFIDIEMPVVNGVQIAQFIRSDVSKDDLTVIAVTTRNSKEDLALFEKTGIDYTFGKPLNYKLDFMANVIDEIIERRKGQMIKKSVSSVESGVSLCSKESTNTLLIA.

2 disordered regions span residues 1 to 39 (MTRLTRPMVRSPISLPSTPSQLLHSASLSSSPSSPSLVQ) and 163 to 188 (TLKSTVSTSTSTSTSTSTGTNTETKT). A compositionally biased stretch (low complexity) spans 19 to 39 (PSQLLHSASLSSSPSSPSLVQ). In terms of domain architecture, Response regulatory spans 209-327 (KFLLVDDNLI…LDFMANVIDE (119 aa)). Asp-260 bears the 4-aspartylphosphate mark.

Required for stress adaptation, morphogenesis and virulence. This Lodderomyces elongisporus (strain ATCC 11503 / CBS 2605 / JCM 1781 / NBRC 1676 / NRRL YB-4239) (Yeast) protein is Stress response regulator protein 1 (SRR1).